The chain runs to 556 residues: 2-isopropylmalate synthase (556 aa).

Residues 33–307 (PIWCSSDLRD…HPQLDFSDID (275 aa)) form the Pyruvate carboxyltransferase domain. Residues aspartate 42, histidine 246, histidine 248, and asparagine 282 each contribute to the Mg(2+) site. The segment at 439–556 (ATSPYVLASH…AVTQAEAKAA (118 aa)) is regulatory domain.

This sequence belongs to the alpha-IPM synthase/homocitrate synthase family. LeuA type 2 subfamily. Homodimer. The cofactor is Mg(2+).

It localises to the cytoplasm. It catalyses the reaction 3-methyl-2-oxobutanoate + acetyl-CoA + H2O = (2S)-2-isopropylmalate + CoA + H(+). It participates in amino-acid biosynthesis; L-leucine biosynthesis; L-leucine from 3-methyl-2-oxobutanoate: step 1/4. Its function is as follows. Catalyzes the condensation of the acetyl group of acetyl-CoA with 3-methyl-2-oxobutanoate (2-ketoisovalerate) to form 3-carboxy-3-hydroxy-4-methylpentanoate (2-isopropylmalate). The sequence is that of 2-isopropylmalate synthase from Pseudomonas aeruginosa (strain ATCC 15692 / DSM 22644 / CIP 104116 / JCM 14847 / LMG 12228 / 1C / PRS 101 / PAO1).